The primary structure comprises 668 residues: Probable syringafactin export ATP-binding/permease protein SyfD (668 aa).

Residues 22–260 (LRLQQVSRSF…APEAQPATPP (239 aa)) form the ABC transporter domain. 58 to 65 (GASGSGKS) is a binding site for ATP. The disordered stretch occupies residues 242-263 (RRTAQTTQPAPEAQPATPPGPA). Positions 245 to 256 (AQTTQPAPEAQP) are enriched in low complexity. 5 consecutive transmembrane segments (helical) span residues 267–287 (LLASLGLFREAFNMAWIALIS), 293–313 (LLTMLGIIIGITSVVSISAIG), 541–561 (LTLLLSLIAVISLVVGGIGVM), 602–622 (MGGVIGIGLSYAIGYLFTLFV), and 631–651 (LASVVTAFACSTLIGVLFGFV).

Belongs to the ABC transporter superfamily. Macrolide exporter (TC 3.A.1.122) family. In terms of assembly, probably part of a tripartite efflux system, which is composed of an inner membrane transporter, a periplasmic membrane fusion protein, and an outer membrane component.

The protein resides in the cell inner membrane. Its function is as follows. Probably involved in the export of syringafactins. In Pseudomonas syringae pv. tomato (strain ATCC BAA-871 / DC3000), this protein is Probable syringafactin export ATP-binding/permease protein SyfD.